The chain runs to 245 residues: Probable phosphatase YcdX (245 aa).

Zn(2+)-binding residues include histidine 7, histidine 9, histidine 15, histidine 40, glutamate 73, histidine 101, histidine 131, aspartate 192, and histidine 194.

This sequence belongs to the PHP family. Homotrimer. The cofactor is Zn(2+).

The protein is Probable phosphatase YcdX of Escherichia coli O17:K52:H18 (strain UMN026 / ExPEC).